The following is a 172-amino-acid chain: Diphosphoinositol polyphosphate phosphohydrolase 1 (172 aa).

Methionine 1 bears the N-acetylmethionine mark. Substrate contacts are provided by residues arginine 10, 18–20, and 39–41; these read KKR and SSR. Residues 17 to 142 form the Nudix hydrolase domain; it reads YKKRAACLCF…KPVQASYFET (126 aa). The Mg(2+) site is built by glycine 50 and glutamate 66. A Nudix box motif is present at residues 51-72; sequence GGMEPEEEPSVAAVREVCEEAG. The active-site Proton acceptor is glutamate 69. Glutamate 70 serves as a coordination point for Mg(2+). Residues 89-91, arginine 115, and lysine 133 each bind substrate; that span reads RKH.

It belongs to the Nudix hydrolase family. DIPP subfamily. Monomer. Mg(2+) serves as cofactor. It depends on Mn(2+) as a cofactor. Zn(2+) is required as a cofactor. As to expression, widely expressed. Expressed at higher level in brain, heart, pancreas and liver. Also expressed in placenta, lung and kidney.

It is found in the cytoplasm. Its subcellular location is the nucleus. The catalysed reaction is diphospho-myo-inositol polyphosphate + H2O = myo-inositol polyphosphate + phosphate.. It carries out the reaction 5-diphospho-1D-myo-inositol 1,2,3,4,6-pentakisphosphate + H2O = 1D-myo-inositol hexakisphosphate + phosphate + H(+). The enzyme catalyses 3,5-bis(diphospho)-1D-myo-inositol 1,2,4,6-tetrakisphosphate + H2O = 3-diphospho-1D-myo-inositol 1,2,4,5,6-pentakisphosphate + phosphate + 2 H(+). It catalyses the reaction [phosphate](n+1) + n H2O = (n+1) phosphate + n H(+). The catalysed reaction is P(1),P(5)-bis(5'-adenosyl) pentaphosphate + H2O = ADP + ATP + 2 H(+). It carries out the reaction P(1),P(6)-bis(5'-adenosyl) hexaphosphate + H2O = 2 ATP + 2 H(+). The enzyme catalyses P(1),P(4)-bis(5'-adenosyl) tetraphosphate + H2O = AMP + ATP + 2 H(+). It catalyses the reaction a 5'-end (N(7)-methyl 5'-triphosphoguanosine)-ribonucleoside in mRNA + H2O = N(7)-methyl-GMP + a 5'-end diphospho-ribonucleoside in mRNA + 2 H(+). The catalysed reaction is a 5'-end (N(7)-methyl 5'-triphosphoguanosine)-ribonucleoside in mRNA + H2O = N(7)-methyl-GDP + a 5'-end phospho-ribonucleoside in mRNA + 2 H(+). With respect to regulation, endopolyphospahatase activity is inhibited by NaF, NaPPi, beta-glycerol phosphate and heparin. 5-diphosphoinositol pentakisphosphate (5-InsP7) inhibits its mRNA decapping activity. Cleaves a beta-phosphate from the diphosphate groups in PP-InsP5 (diphosphoinositol pentakisphosphate) and [PP]2-InsP4 (bisdiphosphoinositol tetrakisphosphate), suggesting that it may play a role in signal transduction. InsP6 (inositol hexakisphosphate) is not a substrate. Acts as a negative regulator of the ERK1/2 pathway. Also able to catalyze the hydrolysis of dinucleoside oligophosphates, with diadenosine 5',5'''-P1,P6-hexaphosphate (Ap6A) and diadenosine 5',5'''- P1,P5-pentaphosphate (Ap5A) being the preferred substrates. The major reaction products are ADP and p4a from Ap6A and ADP and ATP from Ap5A. Also able to hydrolyze 5-phosphoribose 1-diphosphate. Acts as a decapping enzyme that modulates the stability of a subset of mRNAs implicated in cell motility. Hydrolyzes monomethylated capped RNA after both the alpha- and beta-phosphates generating m7GMP + ppRNA and m7GDP + pRNA. Can hydrolyze unmethylated capped RNAs. Divalent cations zinc, magnesium and manganese determine its substrate specificity. Exhibits diphosphoinositol polyphosphate phosphohydrolase in the presence of magnesium ions, diadenosine hexaphosphate hydrolase activity in the presence of manganese ions and endopolyphosphatase activity in the presence of zinc ions. Plays an important role in limiting DNA damage and maintaining cell survival upon oxidative stress via its endopolyphosphatase activity. This Homo sapiens (Human) protein is Diphosphoinositol polyphosphate phosphohydrolase 1.